The chain runs to 297 residues: Phosphoribosylaminoimidazole-succinocarboxamide synthase (297 aa).

Belongs to the SAICAR synthetase family.

The catalysed reaction is 5-amino-1-(5-phospho-D-ribosyl)imidazole-4-carboxylate + L-aspartate + ATP = (2S)-2-[5-amino-1-(5-phospho-beta-D-ribosyl)imidazole-4-carboxamido]succinate + ADP + phosphate + 2 H(+). It participates in purine metabolism; IMP biosynthesis via de novo pathway; 5-amino-1-(5-phospho-D-ribosyl)imidazole-4-carboxamide from 5-amino-1-(5-phospho-D-ribosyl)imidazole-4-carboxylate: step 1/2. This Methylobacillus flagellatus (strain ATCC 51484 / DSM 6875 / VKM B-1610 / KT) protein is Phosphoribosylaminoimidazole-succinocarboxamide synthase.